The primary structure comprises 274 residues: Enoyl-CoA isomerase/hydratase fer4 (274 aa).

Residues 77–81 (AGADL) and G124 contribute to the substrate site. The stretch at 79 to 109 (ADLKERREMSEAEVIEFLQDLRHMLEQVEKL) forms a coiled coil.

It belongs to the enoyl-CoA hydratase/isomerase family.

The enzyme catalyses a (3S)-3-hydroxyacyl-CoA = a (2E)-enoyl-CoA + H2O. It carries out the reaction a 4-saturated-(3S)-3-hydroxyacyl-CoA = a (3E)-enoyl-CoA + H2O. Its pathway is siderophore biosynthesis. Functionally, enoyl-CoA isomerase/hydratase; part of the gene cluster that mediates the biosynthesis of siderophore ferrichrome A which is contributing to organismal virulence. The first step of ferrichrome A biosynthesis is performed by the HMG-CoA synthase hcs1 which catalyzes the generation of HMG-CoA and CoA using acetoacetyl-CoA and acetyl-CoA as substrates. The enoyl-CoA isomerase/hydratase fer4 then catalyzes the conversion of hcs1-produced HMG-CoA to methylglutaconyl-CoA. The acyltransferase fer5 then fuses the fer4-generated methylglutaconyl-CoA with sid1-generated hydroxyornithine to yield methylglutaconyl hydroxyornithine. Methylglutaconyl hydroxyornithine is then available for use by the NRPS fer3 to generate ferrichrome A. In Mycosarcoma maydis (Corn smut fungus), this protein is Enoyl-CoA isomerase/hydratase fer4.